A 266-amino-acid chain; its full sequence is 3-methyl-2-oxobutanoate hydroxymethyltransferase (266 aa).

Mg(2+)-binding residues include Asp-45 and Asp-84. 3-methyl-2-oxobutanoate is bound by residues 45–46, Asp-84, and Lys-113; that span reads DS. Glu-115 lines the Mg(2+) pocket. The Proton acceptor role is filled by Glu-183.

The protein belongs to the PanB family. In terms of assembly, homodecamer; pentamer of dimers. Mg(2+) is required as a cofactor.

It localises to the cytoplasm. It carries out the reaction 3-methyl-2-oxobutanoate + (6R)-5,10-methylene-5,6,7,8-tetrahydrofolate + H2O = 2-dehydropantoate + (6S)-5,6,7,8-tetrahydrofolate. Its pathway is cofactor biosynthesis; (R)-pantothenate biosynthesis; (R)-pantoate from 3-methyl-2-oxobutanoate: step 1/2. Catalyzes the reversible reaction in which hydroxymethyl group from 5,10-methylenetetrahydrofolate is transferred onto alpha-ketoisovalerate to form ketopantoate. In Coxiella burnetii (strain Dugway 5J108-111), this protein is 3-methyl-2-oxobutanoate hydroxymethyltransferase.